Consider the following 412-residue polypeptide: Lipoyl synthase, mitochondrial (412 aa).

Positions 127, 132, 138, 159, 163, 166, and 375 each coordinate [4Fe-4S] cluster. A Radical SAM core domain is found at 142 to 364 (SDDEGTATAT…EKEAMDMGFL (223 aa)).

Belongs to the radical SAM superfamily. Lipoyl synthase family. The cofactor is [4Fe-4S] cluster.

The protein resides in the mitochondrion. The catalysed reaction is [[Fe-S] cluster scaffold protein carrying a second [4Fe-4S](2+) cluster] + N(6)-octanoyl-L-lysyl-[protein] + 2 oxidized [2Fe-2S]-[ferredoxin] + 2 S-adenosyl-L-methionine + 4 H(+) = [[Fe-S] cluster scaffold protein] + N(6)-[(R)-dihydrolipoyl]-L-lysyl-[protein] + 4 Fe(3+) + 2 hydrogen sulfide + 2 5'-deoxyadenosine + 2 L-methionine + 2 reduced [2Fe-2S]-[ferredoxin]. The protein operates within protein modification; protein lipoylation via endogenous pathway; protein N(6)-(lipoyl)lysine from octanoyl-[acyl-carrier-protein]: step 2/2. In terms of biological role, catalyzes the radical-mediated insertion of two sulfur atoms into the C-6 and C-8 positions of the octanoyl moiety bound to the lipoyl domains of lipoate-dependent enzymes, thereby converting the octanoylated domains into lipoylated derivatives. This is Lipoyl synthase, mitochondrial from Leishmania infantum.